A 932-amino-acid polypeptide reads, in one-letter code: Alanine--tRNA ligase, mitochondrial (932 aa).

Residues 458–480 (SRLTWNTSSSSSDQTTQQTTQLP) are disordered. Residues 464-478 (TSSSSSDQTTQQTTQ) are compositionally biased toward low complexity. The Zn(2+) site is built by His-610, His-614, Cys-713, and His-717.

Belongs to the class-II aminoacyl-tRNA synthetase family. In terms of assembly, monomer. It depends on Zn(2+) as a cofactor.

The protein localises to the mitochondrion. It catalyses the reaction tRNA(Ala) + L-alanine + ATP = L-alanyl-tRNA(Ala) + AMP + diphosphate. Functionally, catalyzes the attachment of alanine to tRNA(Ala) in a two-step reaction: alanine is first activated by ATP to form Ala-AMP and then transferred to the acceptor end of tRNA(Ala). Also edits incorrectly charged tRNA(Ala) via its editing domain. This is Alanine--tRNA ligase, mitochondrial (malaS) from Dictyostelium discoideum (Social amoeba).